A 117-amino-acid chain; its full sequence is UPF0344 protein GWCH70_0687 (117 aa).

Helical transmembrane passes span 2-22, 32-52, 55-75, and 97-117; these read THAH…AVSL, IVQM…GLLL, IASI…LIGA, and IVAF…FDLF.

It belongs to the UPF0344 family.

The protein resides in the cell membrane. In Geobacillus sp. (strain WCH70), this protein is UPF0344 protein GWCH70_0687.